We begin with the raw amino-acid sequence, 379 residues long: UDP-4-amino-4-deoxy-L-arabinose--oxoglutarate aminotransferase (379 aa).

N6-(pyridoxal phosphate)lysine is present on lysine 182.

It belongs to the DegT/DnrJ/EryC1 family. ArnB subfamily. As to quaternary structure, homodimer. Requires pyridoxal 5'-phosphate as cofactor.

The enzyme catalyses UDP-4-amino-4-deoxy-beta-L-arabinose + 2-oxoglutarate = UDP-beta-L-threo-pentopyranos-4-ulose + L-glutamate. It participates in nucleotide-sugar biosynthesis; UDP-4-deoxy-4-formamido-beta-L-arabinose biosynthesis; UDP-4-deoxy-4-formamido-beta-L-arabinose from UDP-alpha-D-glucuronate: step 2/3. Its pathway is bacterial outer membrane biogenesis; lipopolysaccharide biosynthesis. Functionally, catalyzes the conversion of UDP-4-keto-arabinose (UDP-Ara4O) to UDP-4-amino-4-deoxy-L-arabinose (UDP-L-Ara4N). The modified arabinose is attached to lipid A and is required for resistance to polymyxin and cationic antimicrobial peptides. This Shigella sonnei (strain Ss046) protein is UDP-4-amino-4-deoxy-L-arabinose--oxoglutarate aminotransferase.